Here is a 99-residue protein sequence, read N- to C-terminus: Small ribosomal subunit protein eS24 (99 aa).

It belongs to the eukaryotic ribosomal protein eS24 family. As to quaternary structure, may be present in 2 copies per 70S ribosome. Part of the 30S ribosomal subunit, where it binds 16S rRNA at its canonical site at the bse of the body, as well as a possible second 50S binding site near 23S rRNA helix 45.

The chain is Small ribosomal subunit protein eS24 from Pyrococcus furiosus (strain ATCC 43587 / DSM 3638 / JCM 8422 / Vc1).